The sequence spans 240 residues: Putative protein FAM10A4 (240 aa).

The tract at residues 38–94 (MGGTATQKAKSEENTKEEKPDSKVEEDLKADEPSSEESDLEIDKEGVIEPDTDAPQE) is disordered. The segment covering 46–69 (AKSEENTKEEKPDSKVEEDLKADE) has biased composition (basic and acidic residues). The span at 85 to 94 (IEPDTDAPQE) shows a compositional bias: acidic residues. TPR repeat units lie at residues 110–143 (ANDK…NPRL), 145–177 (ILYA…NPDS), and 179–211 (QPYK…DYDE). The disordered stretch occupies residues 220 to 240 (VQPRAQKIAEHQRKYERKREE). The span at 226–240 (KIAEHQRKYERKREE) shows a compositional bias: basic and acidic residues.

Belongs to the FAM10 family. In terms of tissue distribution, highly expressed in bone marrow and weakly in placenta, pancreas, heart and HeLa cell line.

It is found in the cytoplasm. This Homo sapiens (Human) protein is Putative protein FAM10A4 (ST13P4).